We begin with the raw amino-acid sequence, 331 residues long: Anthranilate phosphoribosyltransferase (331 aa).

5-phospho-alpha-D-ribose 1-diphosphate-binding positions include G79, 82–83, T87, 89–92, 107–115, and A119; these read GD, NIST, and KHGNYGATS. G79 lines the anthranilate pocket. S91 provides a ligand contact to Mg(2+). Anthranilate is bound at residue N110. R165 contributes to the anthranilate binding site. Mg(2+) is bound by residues D223 and E224.

It belongs to the anthranilate phosphoribosyltransferase family. In terms of assembly, homodimer. The cofactor is Mg(2+).

The catalysed reaction is N-(5-phospho-beta-D-ribosyl)anthranilate + diphosphate = 5-phospho-alpha-D-ribose 1-diphosphate + anthranilate. It participates in amino-acid biosynthesis; L-tryptophan biosynthesis; L-tryptophan from chorismate: step 2/5. Its function is as follows. Catalyzes the transfer of the phosphoribosyl group of 5-phosphorylribose-1-pyrophosphate (PRPP) to anthranilate to yield N-(5'-phosphoribosyl)-anthranilate (PRA). The protein is Anthranilate phosphoribosyltransferase of Bacteroides fragilis (strain YCH46).